Consider the following 223-residue polypeptide: PRA1 family protein B5 (223 aa).

The next 5 membrane-spanning stretches (helical) occupy residues 83–103, 105–125, 146–166, 170–190, and 196–216; these read SSYFRVNYVCIVALILGFSLL, HPFSLILLLCLAASWLFLYLF, GGLILSTIAVIFFTSVGSVLI, MIGIATICVHGAFRAPDDLFL, and AASGFLSFIGVPAIPSVAPSA.

This sequence belongs to the PRA1 family. Interacts with PRA1B1, PRA1B2, PRA1B3, PRA1B4, PRA1B6 and PRA1E. In terms of tissue distribution, expressed in roots, lateral roots, lateral root caps, columella cells, leaves, and shoot apex.

The protein localises to the endosome membrane. Its function is as follows. May be involved in both secretory and endocytic intracellular trafficking in the endosomal/prevacuolar compartments. In Arabidopsis thaliana (Mouse-ear cress), this protein is PRA1 family protein B5 (PRA1B5).